A 337-amino-acid polypeptide reads, in one-letter code: Ribosomal RNA small subunit methyltransferase H (337 aa).

S-adenosyl-L-methionine is bound by residues 36–38 (GGH), Asp-56, Phe-82, Asp-100, and Gln-107. Residues 315–337 (LEERSKRIPNPQSPIPASQGDAQ) form a disordered region.

This sequence belongs to the methyltransferase superfamily. RsmH family.

It localises to the cytoplasm. The enzyme catalyses cytidine(1402) in 16S rRNA + S-adenosyl-L-methionine = N(4)-methylcytidine(1402) in 16S rRNA + S-adenosyl-L-homocysteine + H(+). Specifically methylates the N4 position of cytidine in position 1402 (C1402) of 16S rRNA. The protein is Ribosomal RNA small subunit methyltransferase H of Xanthomonas euvesicatoria pv. vesicatoria (strain 85-10) (Xanthomonas campestris pv. vesicatoria).